A 245-amino-acid polypeptide reads, in one-letter code: Eukaryotic translation initiation factor 6 (245 aa).

A phosphoserine; by CK1 mark is found at S174 and S175.

Belongs to the eIF-6 family. In terms of assembly, monomer. Associates with the 60S ribosomal subunit. Phosphorylation at Ser-174 and Ser-175 promotes nuclear export.

It is found in the cytoplasm. The protein localises to the nucleus. Its subcellular location is the nucleolus. Functionally, binds to the 60S ribosomal subunit and prevents its association with the 40S ribosomal subunit to form the 80S initiation complex in the cytoplasm. Is also involved in ribosome biogenesis. Associates with pre-60S subunits in the nucleus and is involved in its nuclear export. In Candida albicans (strain SC5314 / ATCC MYA-2876) (Yeast), this protein is Eukaryotic translation initiation factor 6.